A 541-amino-acid chain; its full sequence is Cyclin-T1-4 (541 aa).

Residues 277 to 366 (VSEVESSVGG…KSRSGVEAPG (90 aa)) are disordered. Polar residues predominate over residues 307-325 (SDNLGGSTKATQNRSNDNG). Over residues 336–354 (QKGERDTETKDSMHTESHP) the composition is skewed to basic and acidic residues. Serine 396 is subject to Phosphoserine. Residues 445 to 541 (EDDKDIQNKS…REPRRHSQER (97 aa)) form a disordered region. Residues 493 to 511 (MESPCEKQLGEGKRRHDNS) are compositionally biased toward basic and acidic residues. Positions 519–528 (KTNPGGSSHS) are enriched in polar residues. Residues 529 to 541 (YGDREPRRHSQER) are compositionally biased toward basic and acidic residues.

Belongs to the cyclin family. Cyclin T subfamily.

This Arabidopsis thaliana (Mouse-ear cress) protein is Cyclin-T1-4 (CYCT1-4).